A 170-amino-acid chain; its full sequence is Flavin reductase (170 aa).

NAD(+) contacts are provided by residues Ser51, His138, and 159–162 (FYRG).

It belongs to the non-flavoprotein flavin reductase family. As to quaternary structure, homodimer. Likely forms a loose transient complex with monooxygenases for which it provides FMNH(2).

The catalysed reaction is FMNH2 + NAD(+) = FMN + NADH + 2 H(+). It carries out the reaction FADH2 + NAD(+) = FAD + NADH + 2 H(+). Catalyzes the reduction of FMN, and to a lesser extent, FAD, using NADH as an electron donor. Is able to provide the FMNH(2) required for the Baeyer-Villiger oxidations catalyzed by 2,5-diketocamphane monooxygenases and 3,6-diketocamphane monooxygenase. NADPH acts as a very poor cosubstrate. This is Flavin reductase from Pseudomonas putida (Arthrobacter siderocapsulatus).